A 399-amino-acid chain; its full sequence is ATP phosphoribosyltransferase regulatory subunit (399 aa).

Belongs to the class-II aminoacyl-tRNA synthetase family. HisZ subfamily. In terms of assembly, heteromultimer composed of HisG and HisZ subunits.

It localises to the cytoplasm. It participates in amino-acid biosynthesis; L-histidine biosynthesis; L-histidine from 5-phospho-alpha-D-ribose 1-diphosphate: step 1/9. Required for the first step of histidine biosynthesis. May allow the feedback regulation of ATP phosphoribosyltransferase activity by histidine. This is ATP phosphoribosyltransferase regulatory subunit from Symbiobacterium thermophilum (strain DSM 24528 / JCM 14929 / IAM 14863 / T).